A 208-amino-acid polypeptide reads, in one-letter code: MALGQRLFITMSRGAGRVQGTLQALVFLGVLVGMVVPSPAGARANGTLLDSRGWGTLLSRSRAGLAGEISGVNWESGYLVGIKRQRRLYCNVGIGFHLQVPPDGRISGTHEENPYSLLEISTVERGVVSLFGVKSALFIAMNSKGRLYTTPSFHDECKFRETLLPNNYNAYESDLYRGTYIALSKYGRVKRGSKVSPIMTVTHFLPRI.

Positions 1–37 (MALGQRLFITMSRGAGRVQGTLQALVFLGVLVGMVVP) are cleaved as a signal peptide. N-linked (GlcNAc...) asparagine glycosylation occurs at N45. A disulfide bridge connects residues C90 and C157.

The protein belongs to the heparin-binding growth factors family. In terms of assembly, interacts with FGFR1, FGFR2 and FGFR4. Affinity between fibroblast growth factors (FGFs) and their receptors is increased by heparan sulfate glycosaminoglycans that function as coreceptors. In terms of tissue distribution, embryos, adult muscles and adult testis.

Its subcellular location is the secreted. The protein resides in the extracellular space. Its function is as follows. Plays an important role in the regulation of cell proliferation, cell differentiation, angiogenesis and myogenesis, and is required for normal muscle regeneration. This Mus musculus (Mouse) protein is Fibroblast growth factor 6 (Fgf6).